A 603-amino-acid chain; its full sequence is Arginine--tRNA ligase (603 aa).

The short motif at 143–153 (PNIAKEMHVGH) is the 'HIGH' region element.

It belongs to the class-I aminoacyl-tRNA synthetase family. Monomer.

The protein localises to the cytoplasm. The enzyme catalyses tRNA(Arg) + L-arginine + ATP = L-arginyl-tRNA(Arg) + AMP + diphosphate. In Prochlorococcus marinus (strain MIT 9303), this protein is Arginine--tRNA ligase.